The following is a 215-amino-acid chain: Large ribosomal subunit protein uL4 (215 aa).

The tract at residues 46–76 (TAKSKNRAEVSGGGRKPWAQKGGGRARAGSI) is disordered. The span at 56-71 (SGGGRKPWAQKGGGRA) shows a compositional bias: gly residues.

It belongs to the universal ribosomal protein uL4 family. Part of the 50S ribosomal subunit.

Functionally, one of the primary rRNA binding proteins, this protein initially binds near the 5'-end of the 23S rRNA. It is important during the early stages of 50S assembly. It makes multiple contacts with different domains of the 23S rRNA in the assembled 50S subunit and ribosome. Forms part of the polypeptide exit tunnel. The protein is Large ribosomal subunit protein uL4 of Helicobacter acinonychis (strain Sheeba).